A 55-amino-acid polypeptide reads, in one-letter code: Large ribosomal subunit protein bL33B (55 aa).

Belongs to the bacterial ribosomal protein bL33 family.

This chain is Large ribosomal subunit protein bL33B, found in Kineococcus radiotolerans (strain ATCC BAA-149 / DSM 14245 / SRS30216).